A 51-amino-acid polypeptide reads, in one-letter code: Large ribosomal subunit protein eL39x (51 aa).

This sequence belongs to the eukaryotic ribosomal protein eL39 family.

This is Large ribosomal subunit protein eL39x (RPL39C) from Oryza sativa subsp. japonica (Rice).